The chain runs to 150 residues: MRKKKKSLTEVSALGQYIPMSVHKARRVIDQIRGRSYKETLMILELMPYRACYPIFKIIYSAAANAKHNKGFEKEDLLVWKAEVNKGPTRKKLKPRARGRSYLIKKPTCHISVVLKDISYYEAYETLYNREKYLPSNFRLKSSGAIWDKK.

It belongs to the universal ribosomal protein uL22 family. In terms of assembly, part of the 50S ribosomal subunit.

It localises to the plastid. The protein localises to the chloroplast. In terms of biological role, this protein binds specifically to 23S rRNA. The globular domain of the protein is located near the polypeptide exit tunnel on the outside of the subunit, while an extended beta-hairpin is found that lines the wall of the exit tunnel in the center of the 70S ribosome. The protein is Large ribosomal subunit protein uL22c (rpl22) of Fagopyrum esculentum subsp. ancestrale (Wild buckwheat).